The primary structure comprises 131 residues: C-glycoside deglycosidase beta subunit (131 aa).

It belongs to the C-glycoside deglycosidase beta subunit family. As to quaternary structure, heterodimer composed of an alpha subunit (CarB) and a beta subunit (CarC). A divalent metal cation is required as a cofactor.

It carries out the reaction 3''-dehydroisovitexin = 1,5-anhydro-D-erythro-hex-1-en-3-ulose + apigenin. It catalyses the reaction 3''-dehydroisoorientin = 1,5-anhydro-D-erythro-hex-1-en-3-ulose + luteolin. In terms of biological role, carbon-carbon bond-cleaving enzyme which participates in the metabolism of C-glycosides. Acts on the C6-glycosylated compounds 3''-dehydroisovitexin (3''-oxo-isovitexin) and 3''-dehydroisoorientin (3''-oxo-homoorientin). Shows weak activity with 3'-dehydromangiferin (3'-oxo-mangiferin). This chain is C-glycoside deglycosidase beta subunit, found in Microbacterium trichothecenolyticum (Aureobacterium trichothecenolyticum).